The primary structure comprises 65 residues: Large ribosomal subunit protein bL33 (65 aa).

The disordered stretch occupies residues 20 to 40 (VPPSEKRSPGVSRYTTEKNRR).

This sequence belongs to the bacterial ribosomal protein bL33 family.

The sequence is that of Large ribosomal subunit protein bL33 from Prochlorococcus marinus (strain MIT 9211).